The primary structure comprises 167 residues: uncharacterized protein (167 aa).

Residues 1–148 form the N-acetyltransferase domain; it reads MLIRVEIPID…SAFQVHRLAD (148 aa).

Belongs to the acetyltransferase family.

This is an uncharacterized protein from Escherichia coli O157:H7.